Here is a 336-residue protein sequence, read N- to C-terminus: Lipoyl synthase (336 aa).

[4Fe-4S] cluster contacts are provided by C81, C86, C92, C107, C111, C114, and S323. Positions 93 to 312 (FGHGTATFMI…EDYGYELGFS (220 aa)) constitute a Radical SAM core domain.

It belongs to the radical SAM superfamily. Lipoyl synthase family. [4Fe-4S] cluster serves as cofactor.

It localises to the cytoplasm. The catalysed reaction is [[Fe-S] cluster scaffold protein carrying a second [4Fe-4S](2+) cluster] + N(6)-octanoyl-L-lysyl-[protein] + 2 oxidized [2Fe-2S]-[ferredoxin] + 2 S-adenosyl-L-methionine + 4 H(+) = [[Fe-S] cluster scaffold protein] + N(6)-[(R)-dihydrolipoyl]-L-lysyl-[protein] + 4 Fe(3+) + 2 hydrogen sulfide + 2 5'-deoxyadenosine + 2 L-methionine + 2 reduced [2Fe-2S]-[ferredoxin]. It participates in protein modification; protein lipoylation via endogenous pathway; protein N(6)-(lipoyl)lysine from octanoyl-[acyl-carrier-protein]: step 2/2. In terms of biological role, catalyzes the radical-mediated insertion of two sulfur atoms into the C-6 and C-8 positions of the octanoyl moiety bound to the lipoyl domains of lipoate-dependent enzymes, thereby converting the octanoylated domains into lipoylated derivatives. This chain is Lipoyl synthase, found in Stenotrophomonas maltophilia (strain R551-3).